Here is a 312-residue protein sequence, read N- to C-terminus: Olfactory receptor 51I2 (312 aa).

Topologically, residues 1–25 (MGLFNVTHPAFFLLTGIPGLESSHS) are extracellular. The N-linked (GlcNAc...) asparagine glycan is linked to Asn5. A helical membrane pass occupies residues 26–46 (WLSGPLCVMYAVALGGNTVIL). Topologically, residues 47–54 (QAVRVEPS) are cytoplasmic. A helical membrane pass occupies residues 55 to 75 (LHEPMYYFLSMLSFSDVAISM). The Extracellular portion of the chain corresponds to 76-99 (ATLPTVLRTFCLNARNITFDACLI). A disulfide bridge links Cys97 with Cys189. Residues 100 to 120 (QMFLIHFFSMMESGILLAMSF) form a helical membrane-spanning segment. The Cytoplasmic portion of the chain corresponds to 121–139 (DRYVAICDPLRYATVLTTE). A helical membrane pass occupies residues 140 to 160 (VIAAMGLGAAARSFITLFPLP). Residues 161–196 (FLIKRLPICRSNVLSHSYCLHPDMMRLACADISINS) are Extracellular-facing. The chain crosses the membrane as a helical span at residues 197-217 (IYGLFVLVSTFGMDLFFIFLS). Residues 218–237 (YVLILRSVMATASREERLKA) are Cytoplasmic-facing. Residues 238–258 (LNTCVSHILAVLAFYVPMIGV) form a helical membrane-spanning segment. At 259-273 (STVHRFGKHVPCYIH) the chain is on the extracellular side. The chain crosses the membrane as a helical span at residues 274-294 (VLMSNVYLFVPPVLNPLIYSA). Residues 295 to 312 (KTKEIRRAIFRMFHHIKI) are Cytoplasmic-facing.

Belongs to the G-protein coupled receptor 1 family.

It localises to the cell membrane. Functionally, odorant receptor. This is Olfactory receptor 51I2 (OR51I2) from Homo sapiens (Human).